The chain runs to 213 residues: Probable inactive serine/threonine-protein kinase DDB_G0280559 (213 aa).

The 211-residue stretch at 1–211 folds into the Protein kinase domain; that stretch reads MVLRYSYVFK…WNEIVNHSFF (211 aa).

Belongs to the protein kinase superfamily. Ser/Thr protein kinase family.

The sequence is that of Probable inactive serine/threonine-protein kinase DDB_G0280559 from Dictyostelium discoideum (Social amoeba).